Here is a 241-residue protein sequence, read N- to C-terminus: 2-C-methyl-D-erythritol 4-phosphate cytidylyltransferase (241 aa).

Belongs to the IspD/TarI cytidylyltransferase family. IspD subfamily.

The enzyme catalyses 2-C-methyl-D-erythritol 4-phosphate + CTP + H(+) = 4-CDP-2-C-methyl-D-erythritol + diphosphate. It functions in the pathway isoprenoid biosynthesis; isopentenyl diphosphate biosynthesis via DXP pathway; isopentenyl diphosphate from 1-deoxy-D-xylulose 5-phosphate: step 2/6. In terms of biological role, catalyzes the formation of 4-diphosphocytidyl-2-C-methyl-D-erythritol from CTP and 2-C-methyl-D-erythritol 4-phosphate (MEP). This chain is 2-C-methyl-D-erythritol 4-phosphate cytidylyltransferase, found in Baumannia cicadellinicola subsp. Homalodisca coagulata.